Consider the following 161-residue polypeptide: uncharacterized protein (161 aa).

This is an uncharacterized protein from Schizosaccharomyces pombe (strain 972 / ATCC 24843) (Fission yeast).